We begin with the raw amino-acid sequence, 834 residues long: MENFCFQDSVSLFITIMVLVLLPRLSLSDTSTYTRPENFYVNCGSDSNVFYGGQTFVGDTNSSTNSVSFTNKGTEVINDQSSVAPEIYRTVRIFRHPSSYKFKLDSLGLHFVRLHFSVVFSRADLLTARFTVSATSGSNHHLKSFSPQNLTNTPRVEEFLLMMNSLEFEIRFVPDHSSLALINAIEVFSAPDDLEIPSASDKNLHTIYRLNVGGEKITPDNDTLGRTWLPDDDDFLYRKDSARNINSTQTPNYVGGLSSATDSTAPDFVYKTAKAMNRSSNEQVGMLMNVTWSFKVKSNHRHFIRIHFSDILSNLSNSDSDFYLFVNGYWRVDVKPSEQPRLASPFFKDVVNVSDGSGLLNISIGTKEANKDAGFLNGLEMMEVLSKSGSDYSNRSSSRVHIITGCAVAAAAASALVFSLLFMVFLKRRRSKKTKPEVEGTVWSPLPLHRGGSSDNRPISQYHNSPLRNLHLGLTIPFTDILSATNNFDEQLLIGKGGFGYVYKAILPDGTKAAIKRGKTGSGQGILEFQTEIQVLSRIRHRHLVSLTGYCEENSEMILVYEFMEKGTLKEHLYGSNLPSLTWKQRLEICIGAARGLDYLHSSGSEGAIIHRDVKSTNILLDEHNIAKVADFGLSKIHNQDESNISINIKGTFGYLDPEYLQTHKLTEKSDVYAFGVVLLEVLFARPAIDPYLPHEEVNLSEWVMFCKSKGTIDEILDPSLIGQIETNSLKKFMEIAEKCLKEYGDERPSMRDVIWDLEYVLQLQMMTNRREAHEEDSTAINSGGSLVAPRLMVSDSFSTNSIFQNGDESKNRFGFTDSSETRVFSQLKISDAR.

The first 28 residues, 1–28 (MENFCFQDSVSLFITIMVLVLLPRLSLS), serve as a signal peptide directing secretion. Over 29–405 (DTSTYTRPEN…SSSRVHIITG (377 aa)) the chain is Extracellular. Residues N61, N149, N221, N246, N277, N289, N314, N352, N361, and N394 are each glycosylated (N-linked (GlcNAc...) asparagine). A helical membrane pass occupies residues 406 to 426 (CAVAAAAASALVFSLLFMVFL). Residues 427–834 (KRRRSKKTKP…FSQLKISDAR (408 aa)) lie on the Cytoplasmic side of the membrane. The region spanning 488 to 761 (FDEQLLIGKG…RDVIWDLEYV (274 aa)) is the Protein kinase domain. Residues 494–502 (IGKGGFGYV) and K516 each bind ATP. D613 serves as the catalytic Proton acceptor.

It belongs to the protein kinase superfamily. Ser/Thr protein kinase family.

It is found in the membrane. The sequence is that of Probable receptor-like protein kinase At2g23200 from Arabidopsis thaliana (Mouse-ear cress).